The primary structure comprises 287 residues: Orotidine 5'-phosphate decarboxylase (287 aa).

Lys97 acts as the Proton donor in catalysis.

Belongs to the OMP decarboxylase family. Type 2 subfamily.

The catalysed reaction is orotidine 5'-phosphate + H(+) = UMP + CO2. The protein operates within pyrimidine metabolism; UMP biosynthesis via de novo pathway; UMP from orotate: step 2/2. This is Orotidine 5'-phosphate decarboxylase (pyrF) from Clostridium perfringens (strain 13 / Type A).